The following is a 744-amino-acid chain: Elongation factor G, mitochondrial (744 aa).

Residues 1 to 25 (MTISCLLRIRPALAKSFFENGQRAF) constitute a mitochondrion transit peptide. One can recognise a tr-type G domain in the interval 38–315 (ERIRNIGISA…AVLDYLPNPG (278 aa)). Residues 47 to 54 (AHIDSGKT), 114 to 118 (DTPGH), and 168 to 171 (NKLD) contribute to the GTP site.

The protein belongs to the TRAFAC class translation factor GTPase superfamily. Classic translation factor GTPase family. EF-G/EF-2 subfamily.

It localises to the mitochondrion. It functions in the pathway protein biosynthesis; polypeptide chain elongation. Its function is as follows. Mitochondrial GTPase that catalyzes the GTP-dependent ribosomal translocation step during translation elongation. During this step, the ribosome changes from the pre-translocational (PRE) to the post-translocational (POST) state as the newly formed A-site-bound peptidyl-tRNA and P-site-bound deacylated tRNA move to the P and E sites, respectively. Catalyzes the coordinated movement of the two tRNA molecules, the mRNA and conformational changes in the ribosome. The polypeptide is Elongation factor G, mitochondrial (Culex quinquefasciatus (Southern house mosquito)).